Here is a 63-residue protein sequence, read N- to C-terminus: uncharacterized protein (63 aa).

This is an uncharacterized protein from Azospirillum brasilense.